Consider the following 176-residue polypeptide: Small ribosomal subunit protein uS5 (176 aa).

The 64-residue stretch at 11–74 (LSEVLVDVNR…QAAKKRMMKV (64 aa)) folds into the S5 DRBM domain.

It belongs to the universal ribosomal protein uS5 family. Part of the 30S ribosomal subunit. Contacts proteins S4 and S8.

Functionally, with S4 and S12 plays an important role in translational accuracy. In terms of biological role, located at the back of the 30S subunit body where it stabilizes the conformation of the head with respect to the body. This Rickettsia peacockii (strain Rustic) protein is Small ribosomal subunit protein uS5.